The sequence spans 365 residues: MWLQHLSLKTFRNYKETKIDFNPKLNVFLGRNAQGKTNMLEAIYFLALTRSHRTQTDKNLIHFDEEQLHLSGLVQKKTGSIPLEIELTQKGRVTKVNHLKQARLSDYVGHMNVVLFAPEDLQLIKGAPSIRRKFIDMELGQIKPIYLSDLTNYNHILKQRNTYLKSAQKIDETFLSVLDDQLVDYGCRVMNHRLDFIKKLESFGRKKHFELSNQIEELSISYQPSVNITDKQNLSESFKIALEKSRSRDLFKKNTGVGPHRDDISFYINGMDASFGSQGQHRSLVLSIKLAEIELMESITTESPILLLDDVMSELDNTRQLKLLETISQSIQTFITTTSLDHLQNLPENLSIFTIQDGKAAVNGN.

An ATP-binding site is contributed by 30 to 37; the sequence is GRNAQGKT.

It belongs to the RecF family.

The protein resides in the cytoplasm. Functionally, the RecF protein is involved in DNA metabolism; it is required for DNA replication and normal SOS inducibility. RecF binds preferentially to single-stranded, linear DNA. It also seems to bind ATP. The protein is DNA replication and repair protein RecF of Streptococcus pneumoniae (strain CGSP14).